Consider the following 255-residue polypeptide: 5-oxoprolinase subunit A (255 aa).

Belongs to the LamB/PxpA family. As to quaternary structure, forms a complex composed of PxpA, PxpB and PxpC.

It carries out the reaction 5-oxo-L-proline + ATP + 2 H2O = L-glutamate + ADP + phosphate + H(+). Its function is as follows. Catalyzes the cleavage of 5-oxoproline to form L-glutamate coupled to the hydrolysis of ATP to ADP and inorganic phosphate. In Thermococcus onnurineus (strain NA1), this protein is 5-oxoprolinase subunit A.